A 98-amino-acid polypeptide reads, in one-letter code: NADH-ubiquinone oxidoreductase chain 4L (98 aa).

3 helical membrane-spanning segments follow: residues 1-21, 29-49, and 61-81; these read MSITTLNIMVAFTMALLGMFT, SLLCLEGMMLSLFMLATIVSL, and VILLVFAACEAAVGLALLVMV.

It belongs to the complex I subunit 4L family. Core subunit of respiratory chain NADH dehydrogenase (Complex I) which is composed of 45 different subunits.

Its subcellular location is the mitochondrion inner membrane. The catalysed reaction is a ubiquinone + NADH + 5 H(+)(in) = a ubiquinol + NAD(+) + 4 H(+)(out). In terms of biological role, core subunit of the mitochondrial membrane respiratory chain NADH dehydrogenase (Complex I) which catalyzes electron transfer from NADH through the respiratory chain, using ubiquinone as an electron acceptor. Part of the enzyme membrane arm which is embedded in the lipid bilayer and involved in proton translocation. In Ochotona collaris (Collared pika), this protein is NADH-ubiquinone oxidoreductase chain 4L (MT-ND4L).